We begin with the raw amino-acid sequence, 386 residues long: S-adenosylmethionine synthase (386 aa).

Residue H16 coordinates ATP. Mg(2+) is bound at residue D18. E44 contacts K(+). Residues E57 and Q100 each contribute to the L-methionine site. A flexible loop region spans residues 100–110 (QSPDINQGVDQ). Residues 164–166 (DGK), 230–231 (RF), D239, 245–246 (RK), A262, and K266 contribute to the ATP site. D239 serves as a coordination point for L-methionine. L-methionine is bound at residue K270.

The protein belongs to the AdoMet synthase family. Homotetramer; dimer of dimers. Mg(2+) serves as cofactor. K(+) is required as a cofactor.

It localises to the cytoplasm. The enzyme catalyses L-methionine + ATP + H2O = S-adenosyl-L-methionine + phosphate + diphosphate. It functions in the pathway amino-acid biosynthesis; S-adenosyl-L-methionine biosynthesis; S-adenosyl-L-methionine from L-methionine: step 1/1. Functionally, catalyzes the formation of S-adenosylmethionine (AdoMet) from methionine and ATP. The overall synthetic reaction is composed of two sequential steps, AdoMet formation and the subsequent tripolyphosphate hydrolysis which occurs prior to release of AdoMet from the enzyme. In Nitratiruptor sp. (strain SB155-2), this protein is S-adenosylmethionine synthase.